The primary structure comprises 334 residues: Ornithine carbamoyltransferase (334 aa).

Carbamoyl phosphate is bound by residues 57–60, Gln84, Arg108, and 135–138; these read STRT and HPTQ. Residues Asn169, Asp233, and 237–238 contribute to the L-ornithine site; that span reads SM. Residues 275–276 and Arg320 contribute to the carbamoyl phosphate site; that span reads CL.

This sequence belongs to the aspartate/ornithine carbamoyltransferase superfamily. OTCase family.

The protein resides in the cytoplasm. It carries out the reaction carbamoyl phosphate + L-ornithine = L-citrulline + phosphate + H(+). Its pathway is amino-acid biosynthesis; L-arginine biosynthesis; L-arginine from L-ornithine and carbamoyl phosphate: step 1/3. Reversibly catalyzes the transfer of the carbamoyl group from carbamoyl phosphate (CP) to the N(epsilon) atom of ornithine (ORN) to produce L-citrulline. This is Ornithine carbamoyltransferase from Vibrio cholerae serotype O1 (strain ATCC 39315 / El Tor Inaba N16961).